The chain runs to 116 residues: Large ribosomal subunit protein bL20 (116 aa).

This sequence belongs to the bacterial ribosomal protein bL20 family.

In terms of biological role, binds directly to 23S ribosomal RNA and is necessary for the in vitro assembly process of the 50S ribosomal subunit. It is not involved in the protein synthesizing functions of that subunit. This chain is Large ribosomal subunit protein bL20, found in Bacteroides thetaiotaomicron (strain ATCC 29148 / DSM 2079 / JCM 5827 / CCUG 10774 / NCTC 10582 / VPI-5482 / E50).